We begin with the raw amino-acid sequence, 53 residues long: Small ribosomal subunit protein uS14 (53 aa).

4 residues coordinate Zn(2+): Cys-18, Cys-21, Cys-36, and Cys-39.

It belongs to the universal ribosomal protein uS14 family. Zinc-binding uS14 subfamily. Part of the 30S ribosomal subunit. It depends on Zn(2+) as a cofactor.

Its function is as follows. Binds 16S rRNA, required for the assembly of 30S particles. This Thermoplasma volcanium (strain ATCC 51530 / DSM 4299 / JCM 9571 / NBRC 15438 / GSS1) protein is Small ribosomal subunit protein uS14.